We begin with the raw amino-acid sequence, 261 residues long: DNA repair protein RecO (261 aa).

This sequence belongs to the RecO family.

Involved in DNA repair and RecF pathway recombination. The chain is DNA repair protein RecO from Gloeobacter violaceus (strain ATCC 29082 / PCC 7421).